The primary structure comprises 237 residues: 1-(5-phosphoribosyl)-5-[(5-phosphoribosylamino)methylideneamino] imidazole-4-carboxamide isomerase (237 aa).

The active-site Proton acceptor is Asp8. Asp129 functions as the Proton donor in the catalytic mechanism.

This sequence belongs to the HisA/HisF family.

It is found in the cytoplasm. It carries out the reaction 1-(5-phospho-beta-D-ribosyl)-5-[(5-phospho-beta-D-ribosylamino)methylideneamino]imidazole-4-carboxamide = 5-[(5-phospho-1-deoxy-D-ribulos-1-ylimino)methylamino]-1-(5-phospho-beta-D-ribosyl)imidazole-4-carboxamide. The protein operates within amino-acid biosynthesis; L-histidine biosynthesis; L-histidine from 5-phospho-alpha-D-ribose 1-diphosphate: step 4/9. The sequence is that of 1-(5-phosphoribosyl)-5-[(5-phosphoribosylamino)methylideneamino] imidazole-4-carboxamide isomerase from Methanosphaera stadtmanae (strain ATCC 43021 / DSM 3091 / JCM 11832 / MCB-3).